The following is a 669-amino-acid chain: Probable potassium transport system protein Kup (669 aa).

12 helical membrane-spanning segments follow: residues Val-47 to Leu-67, Val-86 to Met-106, Thr-144 to Ile-164, Gly-172 to Met-192, Ile-206 to Ile-226, Gly-252 to Leu-272, Trp-288 to Leu-308, Ala-326 to Ile-346, Ile-378 to Phe-398, Leu-404 to Phe-424, Leu-435 to Ala-455, and Ile-460 to Thr-480.

It belongs to the HAK/KUP transporter (TC 2.A.72) family.

The protein localises to the cell inner membrane. It carries out the reaction K(+)(in) + H(+)(in) = K(+)(out) + H(+)(out). Functionally, transport of potassium into the cell. Likely operates as a K(+):H(+) symporter. The polypeptide is Probable potassium transport system protein Kup (Bdellovibrio bacteriovorus (strain ATCC 15356 / DSM 50701 / NCIMB 9529 / HD100)).